Reading from the N-terminus, the 630-residue chain is Peptidyl-prolyl cis-trans isomerase cyp15 (630 aa).

The interval 1 to 46 (MPEDSNTNDNNKRPLEDNNAVDGESDDDIGPMLPPPPGEDAPRKKK) is disordered. 5 WD repeats span residues 70–108 (MHRD…IEFV), 113–152 (SHLS…MINM), 157–198 (YKPK…KPLH), 203–242 (MHSK…ALPD), and 258–301 (RKKK…REYD). A PPIase cyclophilin-type domain is found at 475 to 629 (LGTSAIIRTT…DDIKIINIDI (155 aa)).

Belongs to the cyclophilin-type PPIase family.

The catalysed reaction is [protein]-peptidylproline (omega=180) = [protein]-peptidylproline (omega=0). Functionally, PPIases accelerate the folding of proteins. It catalyzes the cis-trans isomerization of proline imidic peptide bonds in oligopeptides. In Rhizopus delemar (strain RA 99-880 / ATCC MYA-4621 / FGSC 9543 / NRRL 43880) (Mucormycosis agent), this protein is Peptidyl-prolyl cis-trans isomerase cyp15 (cyp15).